The following is a 156-amino-acid chain: Small ribosomal subunit protein uS7 (156 aa).

Belongs to the universal ribosomal protein uS7 family. In terms of assembly, part of the 30S ribosomal subunit. Contacts proteins S9 and S11.

Functionally, one of the primary rRNA binding proteins, it binds directly to 16S rRNA where it nucleates assembly of the head domain of the 30S subunit. Is located at the subunit interface close to the decoding center, probably blocks exit of the E-site tRNA. This is Small ribosomal subunit protein uS7 from Finegoldia magna (strain ATCC 29328 / DSM 20472 / WAL 2508) (Peptostreptococcus magnus).